Reading from the N-terminus, the 20-residue chain is Unknown protein from 2D-PAGE of needles (20 aa).

The protein is Unknown protein from 2D-PAGE of needles of Pinus pinaster (Maritime pine).